A 275-amino-acid polypeptide reads, in one-letter code: Phosphonoacetaldehyde hydrolase (275 aa).

Catalysis depends on aspartate 15, which acts as the Nucleophile. Mg(2+) is bound by residues aspartate 15 and alanine 17. The active-site Schiff-base intermediate with substrate is lysine 56. Aspartate 189 is a binding site for Mg(2+).

It belongs to the HAD-like hydrolase superfamily. PhnX family. In terms of assembly, homodimer. Requires Mg(2+) as cofactor.

It carries out the reaction phosphonoacetaldehyde + H2O = acetaldehyde + phosphate + H(+). Functionally, involved in phosphonate degradation. The polypeptide is Phosphonoacetaldehyde hydrolase (Pseudomonas fluorescens (strain SBW25)).